We begin with the raw amino-acid sequence, 674 residues long: Glutaminase kidney isoform, mitochondrial (674 aa).

Residues 1–54 constitute a mitochondrion transit peptide; it reads MMRLRGSAMLRELLLRPPAAVGGVLRRTQPLGTLCRRPRGGSRPAAGLVAAARL. The interval 56–123 is disordered; that stretch reads PWWGGGGRAK…PGETDAFGNS (68 aa). The span at 58–71 shows a compositional bias: gly residues; that stretch reads WGGGGRAKGPGSGG. Over residues 89-101 the composition is skewed to low complexity; that stretch reads PPQQQQQQQQQPG. N6-succinyllysine occurs at positions 135 and 169. Ser-291 lines the substrate pocket. An N6-acetyllysine modification is found at Lys-316. Residues 320–327 form a highly mobile activation loop region; sequence GLRFNKLF. Asn-340, Glu-386, Asn-393, Tyr-419, Tyr-471, and Val-489 together coordinate substrate. ANK repeat units follow at residues 590–619 and 624–653; these read DSRT…VNPF and WNNT…QYTP. A disordered region spans residues 652–674; that stretch reads TPQGDSDDGKENQTVHKNLDGLL. Phosphoserine is present on Ser-657. Positions 658–674 are enriched in basic and acidic residues; sequence DDGKENQTVHKNLDGLL.

The protein belongs to the glutaminase family. Homotetramer, dimer of dimers. Tetramer composed of 68 and 65 kDa peptides in a 1:3 ratio. Can assemble into higher oligomers (in vitro), but the physiological significance of this is not clear. Interacts with RAF1 and MAP2K2. Interacts with ATCAY; the interaction is direct and may control GLS localization, negatively regulating its activity. Post-translationally, synthesized as a 74-kDa cytosolic precursor which is proteolytically processed by the mitochondrial-processing peptidase (MPP) via a 72-kDa intermediate to yield the mature mitochondrial 68- and 65-kDa subunits. As to expression, kidney, brain, and intestine.

It localises to the mitochondrion. The protein resides in the cytoplasm. It is found in the cytosol. Its subcellular location is the mitochondrion matrix. The enzyme catalyses L-glutamine + H2O = L-glutamate + NH4(+). Enzyme activity is increased by phosphate, due to increased kcat and increased substrate affinity. Functionally, catalyzes the first reaction in the primary pathway for the renal catabolism of glutamine. Plays a role in maintaining acid-base homeostasis. Regulates the levels of the neurotransmitter glutamate, the main excitatory neurotransmitter in the brain. In Rattus norvegicus (Rat), this protein is Glutaminase kidney isoform, mitochondrial (Gls).